We begin with the raw amino-acid sequence, 328 residues long: tRNA dimethylallyltransferase (328 aa).

19–26 (GPTASGKT) is a binding site for ATP. 21–26 (TASGKT) contributes to the substrate binding site. 3 interaction with substrate tRNA regions span residues 50–53 (DSAL), 174–178 (QRIQR), and 257–262 (RCVGYR).

It belongs to the IPP transferase family. Monomer. The cofactor is Mg(2+).

The catalysed reaction is adenosine(37) in tRNA + dimethylallyl diphosphate = N(6)-dimethylallyladenosine(37) in tRNA + diphosphate. Functionally, catalyzes the transfer of a dimethylallyl group onto the adenine at position 37 in tRNAs that read codons beginning with uridine, leading to the formation of N6-(dimethylallyl)adenosine (i(6)A). This chain is tRNA dimethylallyltransferase, found in Leptothrix cholodnii (strain ATCC 51168 / LMG 8142 / SP-6) (Leptothrix discophora (strain SP-6)).